Reading from the N-terminus, the 20-residue chain is Pregnancy-associated glycoprotein 75 (20 aa).

The protein belongs to the peptidase A1 family. In terms of processing, N-glycosylated. As to expression, expressed in chorionic epithelium (trophectoderm).

It is found in the secreted. The polypeptide is Pregnancy-associated glycoprotein 75 (Bubalus bubalis (Domestic water buffalo)).